Reading from the N-terminus, the 157-residue chain is Protein Smg homolog (157 aa).

This sequence belongs to the Smg family.

In Xanthomonas campestris pv. campestris (strain 8004), this protein is Protein Smg homolog.